A 443-amino-acid polypeptide reads, in one-letter code: MDPLNLSWYDDDLERQNWSRPFNGSDGKADRPHYNYYATLLTLLIAVIVFGNVLVCMAVSREKALQTTTNYLIVSLAVADLLVATLVMPWVVYLEVVGEWKFSKIHCDIFVTLDVMMCTASILNLCAISIDRYTAVAMPMLYNTRYSSKRRVTVMIAIVWVLSFTISCPLLFGLNNADQNECIIANPAFVVYSSIVSFYVPFIVTLLVYIKIYIVLRRRRKRVNTKRSSRAFRSHLRAPLKGNCTHPEDMKLCTVIMKSNGSFPVNRRRVEAARRAQELEMEMLSSTSPPERTRYSPIPPSHHQLTLPDPSHHGLHSTPDSPAKPEKNGHAKNHPKIAKIFEIQTMPNGKTRTSLKTMSRRKLSQQKEKKATQMLAIVLGVFIICWLPFFITHILNIHCDCNIPPVLYSAFTWLGYVNSAVNPIIYTTFNIEFRKAFLKILHC.

Over 1-37 (MDPLNLSWYDDDLERQNWSRPFNGSDGKADRPHYNYY) the chain is Extracellular. Residues Asn-5, Asn-17, and Asn-23 are each glycosylated (N-linked (GlcNAc...) asparagine). The helical transmembrane segment at 38 to 60 (ATLLTLLIAVIVFGNVLVCMAVS) threads the bilayer. At 61–70 (REKALQTTTN) the chain is on the cytoplasmic side. The chain crosses the membrane as a helical span at residues 71 to 93 (YLIVSLAVADLLVATLVMPWVVY). The Extracellular segment spans residues 94 to 108 (LEVVGEWKFSKIHCD). Residues Cys-107 and Cys-182 are joined by a disulfide bond. Residues 109–130 (IFVTLDVMMCTASILNLCAISI) traverse the membrane as a helical segment. Residues 131–151 (DRYTAVAMPMLYNTRYSSKRR) lie on the Cytoplasmic side of the membrane. The helical transmembrane segment at 152–172 (VTVMIAIVWVLSFTISCPLLF) threads the bilayer. The Extracellular segment spans residues 173–188 (GLNNADQNECIIANPA). A helical transmembrane segment spans residues 189-213 (FVVYSSIVSFYVPFIVTLLVYIKIY). Residues 211-373 (KIYIVLRRRR…SQQKEKKATQ (163 aa)) form an interaction with PPP1R9B region. The Cytoplasmic portion of the chain corresponds to 214–373 (IVLRRRRKRV…SQQKEKKATQ (160 aa)). The disordered stretch occupies residues 281–332 (MEMLSSTSPPERTRYSPIPPSHHQLTLPDPSHHGLHSTPDSPAKPEKNGHAK). A helical membrane pass occupies residues 374 to 395 (MLAIVLGVFIICWLPFFITHIL). Over 396 to 409 (NIHCDCNIPPVLYS) the chain is Extracellular. The cysteines at positions 399 and 401 are disulfide-linked. A helical transmembrane segment spans residues 410–431 (AFTWLGYVNSAVNPIIYTTFNI). The Cytoplasmic segment spans residues 432–443 (EFRKAFLKILHC). Residue Cys-443 is the site of S-palmitoyl cysteine attachment.

It belongs to the G-protein coupled receptor 1 family. As to quaternary structure, forms homo- and heterooligomers with DRD4. The interaction with DRD4 may modulate agonist-induced downstream signaling. Interacts with CADPS and CADPS2. Interacts with GPRASP1, PPP1R9B and CLIC6. Interacts with ARRB2. Interacts with HTR2A. Interacts with DRD1. Interacts with KCNA2. Palmitoylated. Palmitoylation which is required for proper localization to the plasma membrane and stability of the receptor could be carried on by ZDHHC4, ZDHHC3 and ZDHHC8.

It localises to the cell membrane. The protein localises to the golgi apparatus membrane. Its function is as follows. Dopamine receptor whose activity is mediated by G proteins which inhibit adenylyl cyclase. Positively regulates postnatal regression of retinal hyaloid vessels via suppression of VEGFR2/KDR activity, downstream of OPN5. The chain is D(2) dopamine receptor (DRD2) from Chlorocebus aethiops (Green monkey).